The sequence spans 454 residues: Zeatin O-xylosyltransferase (454 aa).

It belongs to the UDP-glycosyltransferase family. In terms of tissue distribution, high level in young seeds, less in older seeds and very low in roots.

The enzyme catalyses zeatin + UDP-alpha-D-xylose = O-beta-D-xylosylzeatin + UDP + H(+). Its function is as follows. Utilizes UDP-xylose as the sugar donor and catalyzes the formation of o-xylosylzeatin from zeatin. Does not act on UDP-glucose. The polypeptide is Zeatin O-xylosyltransferase (Phaseolus vulgaris (Kidney bean)).